We begin with the raw amino-acid sequence, 213 residues long: Imidazole glycerol phosphate synthase subunit HisH (213 aa).

The region spanning Asn-4–Asp-211 is the Glutamine amidotransferase type-1 domain. Residue Cys-82 is the Nucleophile of the active site. Catalysis depends on residues His-186 and Glu-188.

In terms of assembly, heterodimer of HisH and HisF.

The protein resides in the cytoplasm. It carries out the reaction 5-[(5-phospho-1-deoxy-D-ribulos-1-ylimino)methylamino]-1-(5-phospho-beta-D-ribosyl)imidazole-4-carboxamide + L-glutamine = D-erythro-1-(imidazol-4-yl)glycerol 3-phosphate + 5-amino-1-(5-phospho-beta-D-ribosyl)imidazole-4-carboxamide + L-glutamate + H(+). The catalysed reaction is L-glutamine + H2O = L-glutamate + NH4(+). It participates in amino-acid biosynthesis; L-histidine biosynthesis; L-histidine from 5-phospho-alpha-D-ribose 1-diphosphate: step 5/9. Functionally, IGPS catalyzes the conversion of PRFAR and glutamine to IGP, AICAR and glutamate. The HisH subunit catalyzes the hydrolysis of glutamine to glutamate and ammonia as part of the synthesis of IGP and AICAR. The resulting ammonia molecule is channeled to the active site of HisF. In Prochlorococcus marinus (strain SARG / CCMP1375 / SS120), this protein is Imidazole glycerol phosphate synthase subunit HisH.